The sequence spans 175 residues: SsrA-binding protein (175 aa).

It belongs to the SmpB family.

The protein resides in the cytoplasm. Functionally, required for rescue of stalled ribosomes mediated by trans-translation. Binds to transfer-messenger RNA (tmRNA), required for stable association of tmRNA with ribosomes. tmRNA and SmpB together mimic tRNA shape, replacing the anticodon stem-loop with SmpB. tmRNA is encoded by the ssrA gene; the 2 termini fold to resemble tRNA(Ala) and it encodes a 'tag peptide', a short internal open reading frame. During trans-translation Ala-aminoacylated tmRNA acts like a tRNA, entering the A-site of stalled ribosomes, displacing the stalled mRNA. The ribosome then switches to translate the ORF on the tmRNA; the nascent peptide is terminated with the 'tag peptide' encoded by the tmRNA and targeted for degradation. The ribosome is freed to recommence translation, which seems to be the essential function of trans-translation. In Prochlorococcus marinus subsp. pastoris (strain CCMP1986 / NIES-2087 / MED4), this protein is SsrA-binding protein.